We begin with the raw amino-acid sequence, 430 residues long: MQFKNALTATAILSASALAGTNSTTSIPSSCSIGTSATATAQADLDKISGCSTIVGNLTITGDLGSAALASIQEIDGSLTIFNSSSLSSFSADSIKKITGDLNMQELIILTSASFGSLQEVDSINMVTLPAISTFSTDLQNANNIIVSDTTLESVEGFSTLKKVNVFNINNNRYLNSFQSSLESVSDSLQFSSNGDNTTLAFDNLVWANNITLRDVNSISFGSLQTVNASLGFINNTLPSLNLTQLSKVGQSLSIVSNDELSKAAFSNLTTVGGGFIIANNTQLKVIDGFNKVQTVGGAIEVTGNFSTLDLSSLKSVRGGANFDSSSSNFSCNALKKLQSNGAIQGDSFVCKNGATSTSVKLSSTSTESSKSSATSSASSSGDASNAQASVSASASSSSSSSKKSKGAAPELVPATSFMGVVAAVAVALL.

A signal peptide spans 1 to 19; the sequence is MQFKNALTATAILSASALA. 12 N-linked (GlcNAc...) asparagine glycosylation sites follow: Asn-22, Asn-57, Asn-83, Asn-197, Asn-210, Asn-228, Asn-235, Asn-242, Asn-268, Asn-280, Asn-305, and Asn-329. Position 340 is a phosphoserine (Ser-340). The span at 362–402 shows a compositional bias: low complexity; that stretch reads LSSTSTESSKSSATSSASSSGDASNAQASVSASASSSSSSS. The segment at 362-411 is disordered; the sequence is LSSTSTESSKSSATSSASSSGDASNAQASVSASASSSSSSSKKSKGAAPE. The GPI-anchor amidated glycine moiety is linked to residue Gly-407. A propeptide spans 408–430 (removed in mature form); that stretch reads AAPELVPATSFMGVVAAVAVALL.

The protein belongs to the SPS2 family. Post-translationally, the GPI-anchor is attached to the protein in the endoplasmic reticulum and serves to target the protein to the cell surface. There, the glucosamine-inositol phospholipid moiety is cleaved off and the GPI-modified mannoprotein is covalently attached via its lipidless GPI glycan remnant to the 1,6-beta-glucan of the outer cell wall layer.

It is found in the cell membrane. The protein localises to the secreted. Its subcellular location is the cell wall. In terms of biological role, required for proper cell wall integrity and for the correct assembly of the mannoprotein outer layer of the cell wall. Important for apical bud growth. The polypeptide is Cell wall protein ECM33 (ECM33) (Saccharomyces cerevisiae (strain JAY291) (Baker's yeast)).